Consider the following 149-residue polypeptide: Alpha-crystallin A chain (149 aa).

The sHSP domain occupies 41-149 (LFRTVLESGI…DTSYSERPIP (109 aa)). Zn(2+) is bound by residues histidine 89, glutamate 91, and histidine 96.

Belongs to the small heat shock protein (HSP20) family. Heteropolymer composed of three CRYAA and one CRYAB subunits. Inter-subunit bridging via zinc ions enhances stability, which is crucial as there is no protein turn over in the lens. Zinc coordination is achieved at least by His-89, Glu-91 and His-96. His-83 and Glu-85 come from the same molecule within the oligomer, while His-90 residue is provided by another molecule. Can also form homodimers and homotetramers (dimers of dimers) which serve as the building blocks of homooligomers.

The protein resides in the cytoplasm. It localises to the nucleus. In terms of biological role, contributes to the transparency and refractive index of the lens. May act as a chaperone, preventing aggregation of various proteins under a wide range of stress conditions. The chain is Alpha-crystallin A chain (CRYAA) from Trachemys scripta elegans (Red-eared slider turtle).